We begin with the raw amino-acid sequence, 215 residues long: Cytochrome b6 (215 aa).

Residues 32 to 52 (IFYCLGGITLTCFLVQVATGF) form a helical membrane-spanning segment. C35 contacts heme c. Heme b-binding residues include H86 and H100. 3 helical membrane passes run 90 to 110 (ASMMVLMMILHVFRVYLTGGF), 116 to 136 (LTWVTGVVLAVLTASFGVTGY), and 186 to 206 (LHTFVLPLLTAVFMLMHFPMI). Positions 187 and 202 each coordinate heme b.

Belongs to the cytochrome b family. PetB subfamily. As to quaternary structure, the 4 large subunits of the cytochrome b6-f complex are cytochrome b6, subunit IV (17 kDa polypeptide, PetD), cytochrome f and the Rieske protein, while the 4 small subunits are PetG, PetL, PetM and PetN. The complex functions as a dimer. Requires heme b as cofactor. It depends on heme c as a cofactor.

The protein localises to the plastid. The protein resides in the chloroplast thylakoid membrane. Component of the cytochrome b6-f complex, which mediates electron transfer between photosystem II (PSII) and photosystem I (PSI), cyclic electron flow around PSI, and state transitions. In Cucumis sativus (Cucumber), this protein is Cytochrome b6.